Here is a 483-residue protein sequence, read N- to C-terminus: Aspartyl/glutamyl-tRNA(Asn/Gln) amidotransferase subunit B (483 aa).

This sequence belongs to the GatB/GatE family. GatB subfamily. In terms of assembly, heterotrimer of A, B and C subunits.

The catalysed reaction is L-glutamyl-tRNA(Gln) + L-glutamine + ATP + H2O = L-glutaminyl-tRNA(Gln) + L-glutamate + ADP + phosphate + H(+). The enzyme catalyses L-aspartyl-tRNA(Asn) + L-glutamine + ATP + H2O = L-asparaginyl-tRNA(Asn) + L-glutamate + ADP + phosphate + 2 H(+). Allows the formation of correctly charged Asn-tRNA(Asn) or Gln-tRNA(Gln) through the transamidation of misacylated Asp-tRNA(Asn) or Glu-tRNA(Gln) in organisms which lack either or both of asparaginyl-tRNA or glutaminyl-tRNA synthetases. The reaction takes place in the presence of glutamine and ATP through an activated phospho-Asp-tRNA(Asn) or phospho-Glu-tRNA(Gln). The protein is Aspartyl/glutamyl-tRNA(Asn/Gln) amidotransferase subunit B of Rickettsia typhi (strain ATCC VR-144 / Wilmington).